Here is a 392-residue protein sequence, read N- to C-terminus: DNA replication and repair protein RecF (392 aa).

ATP is bound at residue 30-37; the sequence is GRNGFGKT.

This sequence belongs to the RecF family.

The protein localises to the cytoplasm. Its function is as follows. The RecF protein is involved in DNA metabolism; it is required for DNA replication and normal SOS inducibility. RecF binds preferentially to single-stranded, linear DNA. It also seems to bind ATP. The polypeptide is DNA replication and repair protein RecF (Corynebacterium aurimucosum (strain ATCC 700975 / DSM 44827 / CIP 107346 / CN-1) (Corynebacterium nigricans)).